Consider the following 432-residue polypeptide: Glutamate--cysteine ligase EgtA (432 aa).

The protein belongs to the glutamate--cysteine ligase type 2 family. EgtA subfamily.

The enzyme catalyses L-cysteine + L-glutamate + ATP = gamma-L-glutamyl-L-cysteine + ADP + phosphate + H(+). It participates in amino-acid biosynthesis; ergothioneine biosynthesis. Catalyzes the synthesis of gamma-glutamylcysteine (gamma-GC) which is used as substrate for the biosynthesis of the low-molecular thiol compound ergothioneine (ERG). ERG is one of the major redox buffers which protects bacteria against redox stressors and antibiotics; loss of ERG or mycothiol (MSH, the other major redox buffer in this bacteria) leads to respiratory alterations and bioenergetic deficiencies that negatively impact virulence. The protein is Glutamate--cysteine ligase EgtA (egtA) of Mycobacterium tuberculosis (strain CDC 1551 / Oshkosh).